We begin with the raw amino-acid sequence, 170 residues long: Adenine phosphoribosyltransferase (170 aa).

Belongs to the purine/pyrimidine phosphoribosyltransferase family. As to quaternary structure, homodimer.

The protein resides in the cytoplasm. It catalyses the reaction AMP + diphosphate = 5-phospho-alpha-D-ribose 1-diphosphate + adenine. It functions in the pathway purine metabolism; AMP biosynthesis via salvage pathway; AMP from adenine: step 1/1. Catalyzes a salvage reaction resulting in the formation of AMP, that is energically less costly than de novo synthesis. This chain is Adenine phosphoribosyltransferase, found in Thermotoga neapolitana (strain ATCC 49049 / DSM 4359 / NBRC 107923 / NS-E).